A 73-amino-acid chain; its full sequence is uncharacterized protein (73 aa).

This is an uncharacterized protein from Saccharomyces cerevisiae (strain ATCC 204508 / S288c) (Baker's yeast).